The following is a 437-amino-acid chain: ATP-dependent RNA helicase SUB2 (437 aa).

The segment covering 1-19 (MSHEAEEDLLEYSDNEQEV) has biased composition (acidic residues). The interval 1-45 (MSHEAEEDLLEYSDNEQEVQVDNKATEVNAEGNGESQAKDSDKKG) is disordered. Residues 53–81 (TGFKDFLLKPELSRAIIDCGFEHPSEVQQ) carry the Q motif motif. A Helicase ATP-binding domain is found at 84 to 259 (IPQSIHGTDV…RRFLQNPLEI (176 aa)). 97–104 (AKSGLGKT) contacts ATP. The short motif at 206–209 (DECD) is the DECD box element. Positions 287 to 432 (KLAQLLDDLE…EFPEEGVDPS (146 aa)) constitute a Helicase C-terminal domain.

This sequence belongs to the DEAD box helicase family. DECD subfamily.

The protein resides in the nucleus. The enzyme catalyses ATP + H2O = ADP + phosphate + H(+). Its function is as follows. ATP-binding RNA helicase involved in transcription elongation and required for the export of mRNA out of the nucleus. SUB2 also plays a role in pre-mRNA splicing and spliceosome assembly. May be involved in rDNA and telomeric silencing, and maintenance of genome integrity. This is ATP-dependent RNA helicase SUB2 (SUB2) from Kluyveromyces lactis (strain ATCC 8585 / CBS 2359 / DSM 70799 / NBRC 1267 / NRRL Y-1140 / WM37) (Yeast).